A 209-amino-acid polypeptide reads, in one-letter code: Uracil phosphoribosyltransferase (209 aa).

5-phospho-alpha-D-ribose 1-diphosphate contacts are provided by residues arginine 79, arginine 104, and 131–139 (DPMLATGGS). Uracil-binding positions include isoleucine 194 and 199–201 (GDA). Position 200 (aspartate 200) interacts with 5-phospho-alpha-D-ribose 1-diphosphate.

This sequence belongs to the UPRTase family. The cofactor is Mg(2+).

It catalyses the reaction UMP + diphosphate = 5-phospho-alpha-D-ribose 1-diphosphate + uracil. It participates in pyrimidine metabolism; UMP biosynthesis via salvage pathway; UMP from uracil: step 1/1. With respect to regulation, allosterically activated by GTP. Catalyzes the conversion of uracil and 5-phospho-alpha-D-ribose 1-diphosphate (PRPP) to UMP and diphosphate. This is Uracil phosphoribosyltransferase from Clostridium perfringens (strain SM101 / Type A).